Here is a 181-residue protein sequence, read N- to C-terminus: HGPRTase-like protein 2 (181 aa).

This sequence belongs to the purine/pyrimidine phosphoribosyltransferase family. Archaeal HPRT subfamily.

Its function is as follows. May catalyze a purine salvage reaction, the substrate is unknown. The polypeptide is HGPRTase-like protein 2 (Haloferax volcanii (strain ATCC 29605 / DSM 3757 / JCM 8879 / NBRC 14742 / NCIMB 2012 / VKM B-1768 / DS2) (Halobacterium volcanii)).